We begin with the raw amino-acid sequence, 70 residues long: Large ribosomal subunit protein bL31 (70 aa).

Cysteine 16, cysteine 18, cysteine 37, and cysteine 40 together coordinate Zn(2+).

This sequence belongs to the bacterial ribosomal protein bL31 family. Type A subfamily. In terms of assembly, part of the 50S ribosomal subunit. It depends on Zn(2+) as a cofactor.

In terms of biological role, binds the 23S rRNA. This chain is Large ribosomal subunit protein bL31, found in Actinobacillus pleuropneumoniae serotype 5b (strain L20).